The chain runs to 181 residues: Isopentenyl-diphosphate Delta-isomerase (181 aa).

Mn(2+) is bound by residues His-24 and His-30. The Nudix hydrolase domain maps to 28–168; that stretch reads LLHLAFSVLL…PDTFSVWFPT (141 aa). The active site involves Cys-68. His-70 is a binding site for Mn(2+). Glu-88 is a Mg(2+) binding site. 2 residues coordinate Mn(2+): Glu-117 and Glu-119. Glu-119 is a catalytic residue.

The protein belongs to the IPP isomerase type 1 family. Requires Mg(2+) as cofactor. The cofactor is Mn(2+).

It is found in the cytoplasm. The catalysed reaction is isopentenyl diphosphate = dimethylallyl diphosphate. Its pathway is isoprenoid biosynthesis; dimethylallyl diphosphate biosynthesis; dimethylallyl diphosphate from isopentenyl diphosphate: step 1/1. Its function is as follows. Catalyzes the 1,3-allylic rearrangement of the homoallylic substrate isopentenyl (IPP) to its highly electrophilic allylic isomer, dimethylallyl diphosphate (DMAPP). The sequence is that of Isopentenyl-diphosphate Delta-isomerase from Aliivibrio fischeri (strain MJ11) (Vibrio fischeri).